Consider the following 216-residue polypeptide: Pyrophosphatase PpaX (216 aa).

The active-site Nucleophile is D9.

Belongs to the HAD-like hydrolase superfamily. PpaX family. Requires Mg(2+) as cofactor.

The enzyme catalyses diphosphate + H2O = 2 phosphate + H(+). Functionally, hydrolyzes pyrophosphate formed during P-Ser-HPr dephosphorylation by HPrK/P. Might play a role in controlling the intracellular pyrophosphate pool. This Bacillus thuringiensis (strain Al Hakam) protein is Pyrophosphatase PpaX.